Here is a 342-residue protein sequence, read N- to C-terminus: 4-hydroxy-3-methylbut-2-enyl diphosphate reductase (342 aa).

C47 contacts [4Fe-4S] cluster. Positions 78 and 111 each coordinate (2E)-4-hydroxy-3-methylbut-2-enyl diphosphate. The dimethylallyl diphosphate site is built by H78 and H111. Isopentenyl diphosphate is bound by residues H78 and H111. C133 is a [4Fe-4S] cluster binding site. (2E)-4-hydroxy-3-methylbut-2-enyl diphosphate is bound at residue H161. Residue H161 coordinates dimethylallyl diphosphate. H161 is a binding site for isopentenyl diphosphate. The active-site Proton donor is E163. T201 contacts (2E)-4-hydroxy-3-methylbut-2-enyl diphosphate. C231 is a [4Fe-4S] cluster binding site. Positions 259, 260, 261, and 303 each coordinate (2E)-4-hydroxy-3-methylbut-2-enyl diphosphate. Residues S259, S260, N261, and S303 each coordinate dimethylallyl diphosphate. Isopentenyl diphosphate is bound by residues S259, S260, N261, and S303.

It belongs to the IspH family. Requires [4Fe-4S] cluster as cofactor.

The catalysed reaction is isopentenyl diphosphate + 2 oxidized [2Fe-2S]-[ferredoxin] + H2O = (2E)-4-hydroxy-3-methylbut-2-enyl diphosphate + 2 reduced [2Fe-2S]-[ferredoxin] + 2 H(+). It carries out the reaction dimethylallyl diphosphate + 2 oxidized [2Fe-2S]-[ferredoxin] + H2O = (2E)-4-hydroxy-3-methylbut-2-enyl diphosphate + 2 reduced [2Fe-2S]-[ferredoxin] + 2 H(+). The protein operates within isoprenoid biosynthesis; dimethylallyl diphosphate biosynthesis; dimethylallyl diphosphate from (2E)-4-hydroxy-3-methylbutenyl diphosphate: step 1/1. Its pathway is isoprenoid biosynthesis; isopentenyl diphosphate biosynthesis via DXP pathway; isopentenyl diphosphate from 1-deoxy-D-xylulose 5-phosphate: step 6/6. Catalyzes the conversion of 1-hydroxy-2-methyl-2-(E)-butenyl 4-diphosphate (HMBPP) into a mixture of isopentenyl diphosphate (IPP) and dimethylallyl diphosphate (DMAPP). Acts in the terminal step of the DOXP/MEP pathway for isoprenoid precursor biosynthesis. This chain is 4-hydroxy-3-methylbut-2-enyl diphosphate reductase, found in Anaplasma marginale (strain Florida).